The chain runs to 920 residues: MLEGKMADINFKEVTLIVSVVAACYWNSLFCGFVFDDVSAILDNKDLHPSTPLKTLFQNDFWGTPMSEERSHKSYRPLTVLTFRLNYLLSELKPMSYHLLNTVFHAVVSVIFLKVCRLFLDKRSSMIAALLFAVHPIHTEAVTGVVGRAELLSSVFFLAAFLSYTKSKGPDNSIVWTPIVLTVFLVAVATLCKEQGITVVGICCVYEVFVAQGYTLPMLCTVAGQFLRGKGSIPLSMLQTLVKLIVLMLSTLLLVVVRVQVIQSQLPVFTRFDNPAAVSPTPTRQLTFNYLLPVNAWLLLNPSELCCDWTMGTIPLIESFLDVRNLATFAFFCFLGALGIFSLRYPGDSSKTVLMALCLMALPFIPASNLFFPVGFVVAERVLYVPSMGFCILVAHGWQKISNKSVLKKLSWVCLSMVILTHALKTLHRNWDWESEYTLFMSALKVNKNNAKLWNNVGHALENEKNFEKALKYFLQATHVQPDDIGAHMNVGRTYKNLNRSREAEASYMLAKSLMPQIIPGKKYAARIAPNHLNVYINLANLIRANESRLEEADQLYRQAISMRPDFKQAYISRGELLLKMNKPLKAKEAYLKALELDRNNADLWYNLAIVYIELKEPNEALKNFNRALELNPKHKLALFNSAILMQESGEVKLRPEARKRLLNYVNEEPQDANGYFNLGMLAMDDKKDSEAESWMKKAIKLQPDFRSALFNLALLYSQTAKELKALPILEELLKYYPDHTKGLILKGDILMNQKKDIPGAKKCFEKILEMDPSNVQGKHNLCVVYFEEKELLKAERCLVETLALAPHEEYIQRHLSIVRDRISSSGIVEQPLAPADKTPGTEEREEIPSEDVKEISSESRPPQILKTNNNRNSKSNKQSTENADQDAPHKTTKDIKEIEKKRVAALKRLEEIERILNGE.

Residues 1-14 are Cytoplasmic-facing; it reads MLEGKMADINFKEV. A helical membrane pass occupies residues 15 to 35; that stretch reads TLIVSVVAACYWNSLFCGFVF. Residues 36–94 lie on the Extracellular side of the membrane; sequence DDVSAILDNKDLHPSTPLKTLFQNDFWGTPMSEERSHKSYRPLTVLTFRLNYLLSELKP. Residues 95–115 traverse the membrane as a helical segment; that stretch reads MSYHLLNTVFHAVVSVIFLKV. Topologically, residues 116–125 are cytoplasmic; it reads CRLFLDKRSS. Transmembrane regions (helical) follow at residues 126–144 and 145–163; these read MIAA…AVTG and VVGR…AFLS. Over 164 to 171 the chain is Cytoplasmic; it reads YTKSKGPD. Residues 172 to 192 traverse the membrane as a helical segment; the sequence is NSIVWTPIVLTVFLVAVATLC. Residues 193 to 198 lie on the Extracellular side of the membrane; sequence KEQGIT. A helical membrane pass occupies residues 199 to 219; that stretch reads VVGICCVYEVFVAQGYTLPML. The Cytoplasmic portion of the chain corresponds to 220–236; the sequence is CTVAGQFLRGKGSIPLS. Residues 237–257 traverse the membrane as a helical segment; it reads MLQTLVKLIVLMLSTLLLVVV. Residues 258–325 lie on the Extracellular side of the membrane; sequence RVQVIQSQLP…LIESFLDVRN (68 aa). The chain crosses the membrane as a helical span at residues 326 to 346; it reads LATFAFFCFLGALGIFSLRYP. Residues 347–358 are Cytoplasmic-facing; the sequence is GDSSKTVLMALC. The chain crosses the membrane as a helical span at residues 359-379; it reads LMALPFIPASNLFFPVGFVVA. The Extracellular segment spans residues 380-381; sequence ER. Residues 382–402 form a helical membrane-spanning segment; the sequence is VLYVPSMGFCILVAHGWQKIS. Residues 403 to 409 are Cytoplasmic-facing; it reads NKSVLKK. The chain crosses the membrane as a helical span at residues 410–428; sequence LSWVCLSMVILTHALKTLH. The Extracellular segment spans residues 429 to 920; the sequence is RNWDWESEYT…EEIERILNGE (492 aa). TPR repeat units lie at residues 451-484, 485-518, 534-567, 568-601, 602-635, 673-706, 707-740, 742-775, and 776-809; these read AKLW…QPDD, IGAH…MPQI, NVYI…RPDF, KQAY…DRNN, ADLW…NPKH, ANGY…QPDF, RSAL…YPDH, KGLI…DPSN, and VQGK…APHE. N499 is a glycosylation site (N-linked (GlcNAc...) asparagine). At Y508 the chain carries Phosphotyrosine. An N-linked (GlcNAc...) asparagine glycan is attached at N546. The disordered stretch occupies residues 829–897; sequence VEQPLAPADK…APHKTTKDIK (69 aa). A compositionally biased stretch (basic and acidic residues) spans 840-858; it reads PGTEEREEIPSEDVKEISS. The span at 867 to 880 shows a compositional bias: low complexity; the sequence is KTNNNRNSKSNKQS. Over residues 887–897 the composition is skewed to basic and acidic residues; the sequence is DAPHKTTKDIK.

Belongs to the TMTC family.

It is found in the membrane. Its subcellular location is the endoplasmic reticulum. It catalyses the reaction a di-trans,poly-cis-dolichyl beta-D-mannosyl phosphate + L-seryl-[protein] = 3-O-(alpha-D-mannosyl)-L-seryl-[protein] + a di-trans,poly-cis-dolichyl phosphate + H(+). The enzyme catalyses a di-trans,poly-cis-dolichyl beta-D-mannosyl phosphate + L-threonyl-[protein] = 3-O-(alpha-D-mannosyl)-L-threonyl-[protein] + a di-trans,poly-cis-dolichyl phosphate + H(+). Its pathway is protein modification; protein glycosylation. Functionally, transfers mannosyl residues to the hydroxyl group of serine or threonine residues. The 4 members of the TMTC family are O-mannosyl-transferases dedicated primarily to the cadherin superfamily, each member seems to have a distinct role in decorating the cadherin domains with O-linked mannose glycans at specific regions. Also acts as O-mannosyl-transferase on other proteins such as PDIA3. Involved in the positive regulation of proteasomal protein degradation in the endoplasmic reticulum (ER), and the control of ER stress response. The chain is Protein O-mannosyl-transferase TMTC3 from Mus musculus (Mouse).